Here is a 901-residue protein sequence, read N- to C-terminus: HTH-type transcriptional regulator MalT (901 aa).

39-46 (SPAGYGKT) provides a ligand contact to ATP. Residues 829–894 (ELIRTSPLTQ…DAVQHAQQLL (66 aa)) form the HTH luxR-type domain. A DNA-binding region (H-T-H motif) is located at residues 853–872 (NEQIAGELAVAATTIKTHIR).

Belongs to the MalT family. In terms of assembly, monomer in solution. Oligomerizes to an active state in the presence of the positive effectors ATP and maltotriose.

With respect to regulation, activated by ATP and maltotriose, which are both required for DNA binding. In terms of biological role, positively regulates the transcription of the maltose regulon whose gene products are responsible for uptake and catabolism of malto-oligosaccharides. Specifically binds to the promoter region of its target genes, recognizing a short DNA motif called the MalT box. This Salmonella typhi protein is HTH-type transcriptional regulator MalT.